The chain runs to 310 residues: Cytosolic Fe-S cluster assembly factor Nubp1 homolog (310 aa).

Residues C9, C23, C26, and C32 each contribute to the [4Fe-4S] cluster site. 63 to 70 (GKGGVGKS) serves as a coordination point for ATP. C240 and C243 together coordinate [4Fe-4S] cluster.

Belongs to the Mrp/NBP35 ATP-binding proteins family. NUBP1/NBP35 subfamily. Heterotetramer of 2 Nubp1 and 2 Nubp2 chains. Requires [4Fe-4S] cluster as cofactor.

It is found in the cytoplasm. Functionally, component of the cytosolic iron-sulfur (Fe/S) protein assembly (CIA) machinery. Required for maturation of extramitochondrial Fe-S proteins. The Nubp1-Nubp2 heterotetramer forms a Fe-S scaffold complex, mediating the de novo assembly of an Fe-S cluster and its transfer to target apoproteins. The chain is Cytosolic Fe-S cluster assembly factor Nubp1 homolog from Drosophila virilis (Fruit fly).